The chain runs to 47 residues: uncharacterized protein (47 aa).

2 disordered regions span residues 1–20 (MSTD…EEWQ) and 25–47 (EKEK…NRKG). Positions 25–40 (EKEKDENNRLFQEQKQ) are enriched in basic and acidic residues.

This is an uncharacterized protein from Dictyostelium discoideum (Social amoeba).